The primary structure comprises 1917 residues: MSHLKLDTLHVQRSPRGSRRSSRSSGRSSACSSGSISPVPIIPIISISHDGDESESESEIETEPARLFQRRMSIKCTNNLAAIIKEGFLLKHTWSFQRWRRRYFPLKRNMLFYAKDEKCDVFDDIDLSDLCYFECGIKNVNHSFQIITPTRSLVLCAESRREMEDWLGSLKTATAPQRPRGDSFLIEQHDILSNHHHWYATSHARPTYCNVCRDALSGVTSHGLSCEVCKCKVHKRCAAKSIANCKWTTLASVGKDIIEQADGSIIMPHQWMEGNLPVSSMCAVCKKTCGSVLRLQDWRCLWCRATVHVACRPQMAVACPIGPAKLSVVPPTSVHSISTDDAWDVASPKGNFSPLLVFVNSKSGDNQGVKFLRRFKQLLNPAQVFDLISTGPSLGLRLFRHFEMFRILVCSGDGSVGWVLSEIDRFNMHKQCQVAVMPLGTGNDLARVLGWGSSCDDDTHLPQILERYESASTKMLDRWSIMVFEKAIPVPKTPKMSISTEQEAMLTGMVTSANHHLRFIVETSDTQTLISSTRNLCDTVDDLVCRISEHHKDDEQLAVKCEILRQKLNMLLDALQEEEMGAHSGDDLIATIRSLIARSIPVTPGSSAYLLNPNISIEKTEKDQINTKERRNSRSLRSSEKEALQCRANSVKRAIYNVVEHSEPGRPKRYQRKLSITPFEALKLPTTASGESSPCTSPLPIIPPINIISPTMETSRLTCISPLPDTRRDSVDENFFNSINLPAPRQFADSRRSSGVPEVIQEIEEGANGETMYRRCRMSLTGGANIDDAGNRLSPCSDGGENTPTERKVDFLRVPIHTGEPIVDPLCDYRPHEVFERTYYMTREMDKDKEKDKENDKTVEIDKEKDNCVAKEDSIPAERLVHTCNLQVPGVVVTPNTQNVYSSASITIIDTDAQTTTEQSSSDDLGGEASDILSAISNEECSVASEIFDKQDAGQTVGDIIQNMDASNFTHIDSPETSDETEAMPGESIMDDISSVLGHDITYALQDNTLTDDTTTLCSEHAGPPKPPRKKSLSALSRTQAHPRRRNSSPPRIARLARMDSDDNPQQFGFENIVFEIDNRCDDQKMREPPRYCSLAQFVEGNDIARQSFKQLMLEQQQRDGDNDTEYPEQQQTPTNKGPNSLATTSEDELSAQTAIKIEIHDIDATVRNINSSMKPNTILTTSTSPTKKSGHGQDISVVVRPPTPLRGDSIKPTASLMPVSSGGAMAVSMNCSGMLGVRAMNASEIRRHSSHAPGLAVREFDKDKDRRHSGFNPNQLTLDPEHARFLSSSPAASRRISCGSLFKKKNKKIATKRSYGLFSVRFFVVAEPDFRLATLALIRPLIPLPNEALPNLQSLKGSKSSLFMGSTLFGFDHLASAEKDKDEKGGKDKDKTPTEETNRKLPIINPLVRLPNWPNLANGGGFISKCLLANADTLCAAVSPLMDPDETLLAGYHEKCVMNNYFGIGIDAKISLDFHNKREEHPEKCRSRARNYMWYGVLGSKQLLQKTCKNLEQRVQLECDGQRIPLPELQGIVILNIPSFMGGTNFWGSSTKKDDIFLPPSFDDRVLEVVAVFGSVQMAASRLINLQHHRIAQCQSVQINILGDEEIPIQVDGEAWLQPPGMIRILHKNRVQMLCRNRSLELSLKSWQEKQRQHSISIQRDASSTASEHANSTDEVISERECYVLLNFIEAVSSLVKWVKFLIISHPALQHDLYEVACRASEALESIHPQGKLLEGPSLRTKLVEVIDSSRQLYDDACTLLRDRGHSLILREDLETKLSAALANMEMELKKCSVQKCIDGKLRAYFNVLAPNEESDGRRKSRPFWVRLRSGSTAGQQAFKPPLTNTREAASNWSVNEVVTWLETMQLSEYVDSFLKNDIRGKELLTLGRRDLKDLGVVKVGHVKRILQAIKDLSEN.

Residues 1 to 10 show a composition bias toward basic and acidic residues; sequence MSHLKLDTLH. The interval 1-37 is disordered; the sequence is MSHLKLDTLHVQRSPRGSRRSSRSSGRSSACSSGSIS. The span at 23 to 37 shows a compositional bias: low complexity; it reads RSSGRSSACSSGSIS. One can recognise a PH domain in the interval 82–175; sequence AIIKEGFLLK…WLGSLKTATA (94 aa). 2 Phorbol-ester/DAG-type zinc fingers span residues 195–245 and 268–319; these read HHHW…IANC and PHQW…AVAC. In terms of domain architecture, DAGKc spans 350-486; the sequence is GNFSPLLVFV…DRWSIMVFEK (137 aa). 3 disordered regions span residues 1015-1053, 1114-1149, and 1380-1399; these read TTLCSEHAGPPKPPRKKSLSALSRTQAHPRRRNSSPPRI, LEQQQRDGDNDTEYPEQQQTPTNKGPNSLATTSEDE, and KDKDEKGGKDKDKTPTEETN. The segment covering 1128-1145 has biased composition (polar residues); sequence PEQQQTPTNKGPNSLATT. The 64-residue stretch at 1854-1917 folds into the SAM domain; it reads WSVNEVVTWL…LQAIKDLSEN (64 aa).

This sequence belongs to the eukaryotic diacylglycerol kinase family.

Its subcellular location is the cytoplasm. It carries out the reaction a 1,2-diacyl-sn-glycerol + ATP = a 1,2-diacyl-sn-glycero-3-phosphate + ADP + H(+). Its function is as follows. Phosphorylates diacylglycerol (DAG) to generate phosphatidic acid (PA). The polypeptide is Diacylglycerol kinase eta (Drosophila yakuba (Fruit fly)).